The primary structure comprises 202 residues: NADH-quinone oxidoreductase subunit B (202 aa).

Residues 1-13 (MSSPTTKFSNAAS) show a composition bias toward polar residues. Residues 1–32 (MSSPTTKFSNAASSAGGPRVTPAAASILDPRT) are disordered. Positions 81, 82, 146, and 176 each coordinate [4Fe-4S] cluster.

It belongs to the complex I 20 kDa subunit family. In terms of assembly, NDH-1 is composed of 14 different subunits. Subunits NuoB, C, D, E, F, and G constitute the peripheral sector of the complex. It depends on [4Fe-4S] cluster as a cofactor.

The protein resides in the cell inner membrane. The enzyme catalyses a quinone + NADH + 5 H(+)(in) = a quinol + NAD(+) + 4 H(+)(out). NDH-1 shuttles electrons from NADH, via FMN and iron-sulfur (Fe-S) centers, to quinones in the respiratory chain. The immediate electron acceptor for the enzyme in this species is believed to be ubiquinone. Couples the redox reaction to proton translocation (for every two electrons transferred, four hydrogen ions are translocated across the cytoplasmic membrane), and thus conserves the redox energy in a proton gradient. This chain is NADH-quinone oxidoreductase subunit B, found in Nitrobacter hamburgensis (strain DSM 10229 / NCIMB 13809 / X14).